A 418-amino-acid chain; its full sequence is Diaminopimelate decarboxylase (418 aa).

K53 carries the post-translational modification N6-(pyridoxal phosphate)lysine. Residues G223 and 264–267 (EPGR) contribute to the pyridoxal 5'-phosphate site. Substrate-binding residues include R267, R303, and Y307. The Proton donor role is filled by C338. Substrate contacts are provided by E339 and Y374. Y374 is a pyridoxal 5'-phosphate binding site.

This sequence belongs to the Orn/Lys/Arg decarboxylase class-II family. LysA subfamily. In terms of assembly, homodimer. Pyridoxal 5'-phosphate is required as a cofactor.

It catalyses the reaction meso-2,6-diaminopimelate + H(+) = L-lysine + CO2. Its pathway is amino-acid biosynthesis; L-lysine biosynthesis via DAP pathway; L-lysine from DL-2,6-diaminopimelate: step 1/1. In terms of biological role, specifically catalyzes the decarboxylation of meso-diaminopimelate (meso-DAP) to L-lysine. The sequence is that of Diaminopimelate decarboxylase from Buchnera aphidicola subsp. Baizongia pistaciae (strain Bp).